The following is a 180-amino-acid chain: Ferric nitrobindin-like protein (180 aa).

The GXWXGXG signature appears at 21 to 27 (GRWEGAG).

The protein belongs to the nitrobindin family.

The polypeptide is Ferric nitrobindin-like protein (Kineococcus radiotolerans (strain ATCC BAA-149 / DSM 14245 / SRS30216)).